Reading from the N-terminus, the 894-residue chain is Translation initiation factor IF-2 (894 aa).

A disordered region spans residues 25 to 304 (ADAGMNKASS…KPTSMQHGFD (280 aa)). 5 stretches are compositionally biased toward basic and acidic residues: residues 33 to 44 (SSDHVSDEEKQK), 52 to 62 (EHGDKSGESEP), 101 to 174 (STIE…KEMN), 184 to 239 (AKKE…ENSD), and 247 to 263 (YARE…EGGA). The span at 283–293 (RGGKGRNKGKL) shows a compositional bias: basic residues. The region spanning 393 to 562 (PRAPVVTIMG…LLQSEVLELT (170 aa)) is the tr-type G domain. The tract at residues 402–409 (GHVDHGKT) is G1. 402-409 (GHVDHGKT) contacts GTP. Positions 427–431 (GITQH) are G2. Positions 448–451 (DTPG) are G3. GTP contacts are provided by residues 448 to 452 (DTPGH) and 502 to 505 (NKID). The tract at residues 502-505 (NKID) is G4. A G5 region spans residues 538-540 (SAK).

It belongs to the TRAFAC class translation factor GTPase superfamily. Classic translation factor GTPase family. IF-2 subfamily.

It is found in the cytoplasm. Its function is as follows. One of the essential components for the initiation of protein synthesis. Protects formylmethionyl-tRNA from spontaneous hydrolysis and promotes its binding to the 30S ribosomal subunits. Also involved in the hydrolysis of GTP during the formation of the 70S ribosomal complex. This Vibrio campbellii (strain ATCC BAA-1116) protein is Translation initiation factor IF-2.